The sequence spans 367 residues: Aldo-keto reductase AMT2 (367 aa).

An NADP(+)-binding site is contributed by Asp-76. Residue Tyr-81 is the Proton donor of the active site. Residue His-173 coordinates substrate. NADP(+)-binding positions include 203–204, Gln-229, 258–268, and 330–338; these read SS, GPLAAGKLARP, and SSVERMDEV. Positions 346 to 367 are disordered; that stretch reads LSDEEESRLEDPYKAQPPQGHS.

Belongs to the aldo/keto reductase family.

Its pathway is mycotoxin biosynthesis. Functionally, aldo-keto reductase; part of the gene clusters that mediate the biosynthesis of AM-toxins, host-selective toxins (HSTs) causing Alternaria blotch on apple, a worldwide distributed disease. AM-toxins are cyclic depsipeptides containing the 3 residues 2-hydroxy-isovaleric acid (2-HIV), dehydroalanine, L-alanine which are common for all 3 AM-toxins I to III. The fourth precursor is L-alpha-amino-methoxyphenyl-valeric acid (L-Amv) for AM-toxin I, L-alpha-amino-phenyl-valeric acid (L-Apv) for AM-toxin II, and L-alpha-amino-hydroxyphenyl-valeric acid (L-Ahv) for AM-toxin III. AM-toxins have two target sites for affecting susceptible apple cells; they cause invagination of the plasma membrane and electrolyte loss and chloroplast disorganization. The non-ribosomal peptide synthetase AMT1 contains 4 catalytic modules and is responsible for activation of each residue in AM-toxin. The aldo-keto reductase AMT2 catalyzes the conversion of 2-keto-isovaleric acid (2-KIV) to 2-hydroxy-isovaleric acid (2-HIV), one of the precursor residues incorporated by AMT1 during AM-toxin biosynthesis, by reduction of its ketone to an alcohol. The cytochrome P450 monooxygenase AMT3 and the thioesterase AMT4 are also important for AM-toxin production, but their exact function within the AM-toxin biosynthesis are not known yet. Up to 21 proteins (including AMT1 to AMT4) are predicted to be involved in AM-toxin biosynthesis since their expression ishighly up-regulated in AM-toxin-producing cultures. In Alternaria alternata (Alternaria rot fungus), this protein is Aldo-keto reductase AMT2.